Here is an 85-residue protein sequence, read N- to C-terminus: Defensin-like protein 112 (85 aa).

Positions 1–24 (MAISKKMLTTFVLTILLAVSFVHC) are cleaved as a signal peptide. Intrachain disulfides connect Cys-40/Cys-80, Cys-46/Cys-71, Cys-56/Cys-78, and Cys-60/Cys-79.

It belongs to the DEFL family.

The protein resides in the secreted. This Arabidopsis thaliana (Mouse-ear cress) protein is Defensin-like protein 112.